The primary structure comprises 355 residues: Uroporphyrinogen decarboxylase (355 aa).

Residues 27–31 (RQAGR), aspartate 77, tyrosine 154, threonine 209, and histidine 327 contribute to the substrate site.

Belongs to the uroporphyrinogen decarboxylase family. In terms of assembly, homodimer.

The protein resides in the cytoplasm. The enzyme catalyses uroporphyrinogen III + 4 H(+) = coproporphyrinogen III + 4 CO2. It participates in porphyrin-containing compound metabolism; protoporphyrin-IX biosynthesis; coproporphyrinogen-III from 5-aminolevulinate: step 4/4. In terms of biological role, catalyzes the decarboxylation of four acetate groups of uroporphyrinogen-III to yield coproporphyrinogen-III. In Yersinia pseudotuberculosis serotype O:1b (strain IP 31758), this protein is Uroporphyrinogen decarboxylase.